The primary structure comprises 449 residues: 3-phosphoshikimate 1-carboxyvinyltransferase (449 aa).

3-phosphoshikimate is bound by residues Lys-28, Ser-29, and Arg-33. A phosphoenolpyruvate-binding site is contributed by Lys-28. Gly-105 and Arg-133 together coordinate phosphoenolpyruvate. 3-phosphoshikimate contacts are provided by Ser-179, Gln-181, Asp-332, and Lys-359. Gln-181 is a phosphoenolpyruvate binding site. Residue Asp-332 is the Proton acceptor of the active site. Phosphoenolpyruvate is bound by residues Arg-363 and Arg-406.

The protein belongs to the EPSP synthase family. In terms of assembly, monomer.

It localises to the cytoplasm. The catalysed reaction is 3-phosphoshikimate + phosphoenolpyruvate = 5-O-(1-carboxyvinyl)-3-phosphoshikimate + phosphate. The protein operates within metabolic intermediate biosynthesis; chorismate biosynthesis; chorismate from D-erythrose 4-phosphate and phosphoenolpyruvate: step 6/7. In terms of biological role, catalyzes the transfer of the enolpyruvyl moiety of phosphoenolpyruvate (PEP) to the 5-hydroxyl of shikimate-3-phosphate (S3P) to produce enolpyruvyl shikimate-3-phosphate and inorganic phosphate. The chain is 3-phosphoshikimate 1-carboxyvinyltransferase from Nitrobacter winogradskyi (strain ATCC 25391 / DSM 10237 / CIP 104748 / NCIMB 11846 / Nb-255).